The primary structure comprises 792 residues: MKYNQYAYVETSPEKATEELLAINFLPENYSSLSFSELLAVLTGNVLAEATTRQAKDAKLAEFAVDDQTDLAAFLLDTPTAITASQFANVALQLLGYHPNYDYSLTDPLTCGEKHALPAFKDLTSKEELIFAFYRLLNTRSKNGQILLDVMAGKGYFTQFWGEGKFMLFNGKSLPVFDTSQVIREVVYVQSDLDTDGDGKGDLLPVTIFRPVESQDQLKVPALYTASPYFGGIIDNVKTNHNVDENLTDATTWTNPKYVAKPLVKSPAPSGQDVPATELATGQSSYGLNEYLLARGFASVFSGAIGNRHGDGIRITGSPEETISQKEVIEWLTGDRVAYTDRTRRFETKASWCSGNVGMTGRSYLGTLQIAIATTGVKGLKTVVSEAAISSWYDYYREHGLVIAPSECQGEDMDKLAEVCQSNLWDGGNFTAKKAYEAEQAELLAAQDRATGQYSDFWESRNYRHHADGIKCSWISVHGLNDWNVKPKNVYKIWQKVKQLPVESHLFLHQGPHYNMNNLVSIDFTDLMNLWFVHELLEVENGAYEQWPKVMIQDNLEADKWHAESDWANDLGQASLYSPTADGYLSTVENGTGQLTFTDLGGTEFKKAGISETDWEYQFISGEKKWAKASLRFESEEFLHPTTLVGRPKVQVRVAANKTVGQLSVALVDLGTRQRLTATPKIFARGNQPFGYRFEADSLQEFVPDKATKAKLITKAHMNLQNYQDMKQPSKLEAGQFVDLEFELQPTYYTLPAGAKLCLIIYSTDQGMTKRPLETEDYTVDLAGTALLLYRK.

Residues serine 363, aspartate 482, and histidine 513 each act as charge relay system in the active site.

Belongs to the peptidase S15 family. As to quaternary structure, homodimer.

It is found in the cytoplasm. It catalyses the reaction Hydrolyzes Xaa-Pro-|- bonds to release unblocked, N-terminal dipeptides from substrates including Ala-Pro-|-p-nitroanilide and (sequentially) Tyr-Pro-|-Phe-Pro-|-Gly-Pro-|-Ile.. Removes N-terminal dipeptides sequentially from polypeptides having unsubstituted N-termini provided that the penultimate residue is proline. The chain is Xaa-Pro dipeptidyl-peptidase from Lactobacillus delbrueckii subsp. bulgaricus (strain ATCC BAA-365 / Lb-18).